Reading from the N-terminus, the 83-residue chain is RNA-binding protein Hfq (83 aa).

Residues 10 to 70 (DTFLNQVRKE…ISTVMPLRPI (61 aa)) enclose the Sm domain.

This sequence belongs to the Hfq family. As to quaternary structure, homohexamer.

RNA chaperone that binds small regulatory RNA (sRNAs) and mRNAs to facilitate mRNA translational regulation in response to envelope stress, environmental stress and changes in metabolite concentrations. Also binds with high specificity to tRNAs. This is RNA-binding protein Hfq from Desulfitobacterium hafniense (strain DSM 10664 / DCB-2).